The sequence spans 289 residues: Phosphatidylglycerol--prolipoprotein diacylglyceryl transferase (289 aa).

The next 3 helical transmembrane spans lie at 24-44 (GIAI…VYLL), 70-90 (GGVL…DWFL), and 111-131 (GING…LWLF). Arg-158 is a binding site for a 1,2-diacyl-sn-glycero-3-phospho-(1'-sn-glycerol). Helical transmembrane passes span 219-239 (GYLS…IEFF) and 253-273 (FSMG…ILVW).

Belongs to the Lgt family.

Its subcellular location is the cell inner membrane. The catalysed reaction is L-cysteinyl-[prolipoprotein] + a 1,2-diacyl-sn-glycero-3-phospho-(1'-sn-glycerol) = an S-1,2-diacyl-sn-glyceryl-L-cysteinyl-[prolipoprotein] + sn-glycerol 1-phosphate + H(+). The protein operates within protein modification; lipoprotein biosynthesis (diacylglyceryl transfer). In terms of biological role, catalyzes the transfer of the diacylglyceryl group from phosphatidylglycerol to the sulfhydryl group of the N-terminal cysteine of a prolipoprotein, the first step in the formation of mature lipoproteins. In Chlorobaculum tepidum (strain ATCC 49652 / DSM 12025 / NBRC 103806 / TLS) (Chlorobium tepidum), this protein is Phosphatidylglycerol--prolipoprotein diacylglyceryl transferase.